Reading from the N-terminus, the 549-residue chain is MLNQKIQNPNPDELMIEVDLCYELDPYELKLDEMIEAEPEPEMIEGLPASDALTPADRYLELFEHVQSAKIFPDSKTFPDCAPKMDPLDILIRYRKVRRHRDFDLRKFVENHFWLPEVYSSEYVSDPQNSLKEHIDQLWPVLTREPQDHIPWSSLLALPQSYIVPGGRFSETYYWDSYFTMLGLAESGREDLLKCMADNFAWMIENYGHIPNGNRTYYLSRSQPPVFALMVELFEEDGVRGARRYLDHLKMEYAFWMDGAESLIPNQAYRHVVRMPDGSLLNRYWDDRDTPRDESWLEDVETAKHSGRPPNEVYRDLRAGAASGWDYSSRWLRDTGRLASIRTTQFIPIDLNAFLFKLESAIANISALKGEKETEALFRQKASARRDAVNRYLWDDENGIYRDYDWRREQLALFSAAAIVPLYVGMANHEQADRLANAVRSRLLTPGGILASEYETGEQWDKPNGWAPLQWMAIQGFKMYGDDLLGDEIARSWLKTVNQFYLEQHKLIEKYHIADGVPREGGGGEYPLQDGFGWTNGVVRRLIGLYGEP.

Residues R168, 175 to 176 (WD), N212, 221 to 223 (RSQ), 292 to 294 (RDE), and G324 each bind substrate. Catalysis depends on proton donor/acceptor residues D326 and E509. E525 serves as a coordination point for substrate.

This sequence belongs to the glycosyl hydrolase 37 family. As to quaternary structure, monomer.

It is found in the cytoplasm. The catalysed reaction is alpha,alpha-trehalose + H2O = alpha-D-glucose + beta-D-glucose. The protein operates within glycan degradation; trehalose degradation; D-glucose from alpha,alpha-trehalose: step 1/1. Hydrolyzes trehalose to glucose. Could be involved, in cells returning to low osmolarity conditions, in the utilization of the accumulated cytoplasmic trehalose, which was synthesized in response to high osmolarity. In Escherichia coli O157:H7, this protein is Cytoplasmic trehalase.